We begin with the raw amino-acid sequence, 326 residues long: ATP phosphoribosyltransferase regulatory subunit (326 aa).

Belongs to the class-II aminoacyl-tRNA synthetase family. HisZ subfamily. Heteromultimer composed of HisG and HisZ subunits.

The protein localises to the cytoplasm. It participates in amino-acid biosynthesis; L-histidine biosynthesis; L-histidine from 5-phospho-alpha-D-ribose 1-diphosphate: step 1/9. Required for the first step of histidine biosynthesis. May allow the feedback regulation of ATP phosphoribosyltransferase activity by histidine. This is ATP phosphoribosyltransferase regulatory subunit from Streptococcus thermophilus (strain ATCC BAA-491 / LMD-9).